Reading from the N-terminus, the 308-residue chain is tRNA pseudouridine synthase B (308 aa).

Asp-49 serves as the catalytic Nucleophile.

The protein belongs to the pseudouridine synthase TruB family. Type 1 subfamily.

It carries out the reaction uridine(55) in tRNA = pseudouridine(55) in tRNA. Responsible for synthesis of pseudouridine from uracil-55 in the psi GC loop of transfer RNAs. In Corynebacterium jeikeium (strain K411), this protein is tRNA pseudouridine synthase B.